Reading from the N-terminus, the 444-residue chain is Gamma-glutamyl phosphate reductase (444 aa).

The protein belongs to the gamma-glutamyl phosphate reductase family.

It localises to the cytoplasm. It catalyses the reaction L-glutamate 5-semialdehyde + phosphate + NADP(+) = L-glutamyl 5-phosphate + NADPH + H(+). It participates in amino-acid biosynthesis; L-proline biosynthesis; L-glutamate 5-semialdehyde from L-glutamate: step 2/2. Functionally, catalyzes the NADPH-dependent reduction of L-glutamate 5-phosphate into L-glutamate 5-semialdehyde and phosphate. The product spontaneously undergoes cyclization to form 1-pyrroline-5-carboxylate. The protein is Gamma-glutamyl phosphate reductase of Albidiferax ferrireducens (strain ATCC BAA-621 / DSM 15236 / T118) (Rhodoferax ferrireducens).